A 313-amino-acid chain; its full sequence is Ribosomal RNA small subunit methyltransferase H (313 aa).

S-adenosyl-L-methionine is bound by residues 35 to 37 (GGH), Asp-55, Phe-80, Asp-102, and Gln-109.

Belongs to the methyltransferase superfamily. RsmH family.

The protein resides in the cytoplasm. The catalysed reaction is cytidine(1402) in 16S rRNA + S-adenosyl-L-methionine = N(4)-methylcytidine(1402) in 16S rRNA + S-adenosyl-L-homocysteine + H(+). Functionally, specifically methylates the N4 position of cytidine in position 1402 (C1402) of 16S rRNA. The protein is Ribosomal RNA small subunit methyltransferase H of Shewanella sp. (strain MR-4).